The sequence spans 230 residues: Ureidoacrylate amidohydrolase RutB (230 aa).

Catalysis depends on D24, which acts as the Proton acceptor. Residue K133 is part of the active site. The Nucleophile role is filled by C166.

Belongs to the isochorismatase family. RutB subfamily.

It carries out the reaction (Z)-3-ureidoacrylate + H2O + H(+) = (Z)-3-aminoacrylate + NH4(+) + CO2. It catalyses the reaction (Z)-3-ureidoacrylate + H2O = (Z)-3-aminoacrylate + carbamate + H(+). The enzyme catalyses (Z)-2-methylureidoacrylate + H2O + H(+) = (Z)-2-methylaminoacrylate + NH4(+) + CO2. Functionally, hydrolyzes ureidoacrylate to form aminoacrylate and carbamate. The carbamate hydrolyzes spontaneously, thereby releasing one of the nitrogen atoms of the pyrimidine ring as ammonia and one of its carbon atoms as CO2. This Escherichia coli O150:H5 (strain SE15) protein is Ureidoacrylate amidohydrolase RutB.